The sequence spans 1376 residues: Spike glycoprotein (1376 aa).

Residues 1–13 (MLFVFILFLPSCL) form the signal peptide. The Extracellular segment spans residues 14–1317 (GYIGDFRCIQ…GTYEMYVKWP (1304 aa)). Positions 15–296 (YIGDFRCIQT…SYISEIKCKT (282 aa)) constitute a BetaCoV S1-NTD domain. A receptor binding site region spans residues 15-330 (YIGDFRCIQT…RRVPNLPDCK (316 aa)). Cystine bridges form between Cys21–Cys158, Cys153–Cys187, Cys165–Cys246, Cys284–Cys294, and Cys329–Cys354. 3 N-linked (GlcNAc...) asparagine; by host glycosylation sites follow: Asn31, Asn60, and Asn134. N-linked (GlcNAc...) asparagine; by host glycosylation is present at Asn192. The BetaCoV S1-CTD domain occupies 327 to 618 (PDCKIEEWLT…GINSGTTCST (292 aa)). Asn357 carries N-linked (GlcNAc...) asparagine; by host glycosylation. Cystine bridges form between Cys372–Cys425 and Cys384–Cys616. Residues Asn435, Asn677, Asn709, Asn717, Asn789, and Asn806 are each glycosylated (N-linked (GlcNAc...) asparagine; by host). 2 fusion peptide regions span residues 922–943 (SAIEDLLFDKVKLSDVGFVEAY) and 941–961 (EAYNNCTGGQEVRDLLCVQSF). Asn945 carries an N-linked (GlcNAc...) asparagine; by host glycan. Cys946 and Cys957 are disulfide-bonded. A heptad repeat 1 region spans residues 1022–1072 (QKMIASAFNNALGAIQEGFDATNSALGKIQSVVNANAEALNNLLNQLSNRF). Residues 1051–1095 (QSVVNANAEALNNLLNQLSNRFGAISASLQEILTRLDRVEAKAQI) adopt a coiled-coil conformation. Asn1232, Asn1242, Asn1261, Asn1277, and Asn1298 each carry an N-linked (GlcNAc...) asparagine; by host glycan. Residues 1266–1306 (APDLSLDFEKLNVTFLDLTYEMNRIQDAIKKLNESYINLKE) are heptad repeat 2. Residues 1279 to 1307 (TFLDLTYEMNRIQDAIKKLNESYINLKEV) are a coiled coil. A helical transmembrane segment spans residues 1318-1338 (WYVWLLIGLAGVAVCVLLFFI). Over 1339–1376 (CCCTGCGSCCFRKCGSCCDEYGGHQDSIVIYNISAHED) the chain is Cytoplasmic. Residues 1372 to 1376 (SAHED) carry the KxHxx motif.

The protein belongs to the betacoronaviruses spike protein family. Homotrimer; each monomer consists of a S1 and a S2 subunit. The resulting peplomers protrude from the virus surface as spikes. Post-translationally, specific enzymatic cleavages in vivo yield mature proteins. The precursor is processed into S1 and S2 by host cell furin or another cellular protease to yield the mature S1 and S2 proteins. Additionally, a second cleavage leads to the release of a fusion peptide after viral attachment to host cell receptor. In terms of processing, the cytoplasmic Cys-rich domain is palmitoylated. Spike glycoprotein is digested within host endosomes.

Its subcellular location is the virion membrane. The protein resides in the host endoplasmic reticulum-Golgi intermediate compartment membrane. It is found in the host cell membrane. In terms of biological role, attaches the virion to the cell membrane by interacting with host receptor, initiating the infection. Functionally, mediates fusion of the virion and cellular membranes by acting as a class I viral fusion protein. Under the current model, the protein has at least three conformational states: pre-fusion native state, pre-hairpin intermediate state, and post-fusion hairpin state. During viral and target cell membrane fusion, the coiled coil regions (heptad repeats) assume a trimer-of-hairpins structure, positioning the fusion peptide in close proximity to the C-terminal region of the ectodomain. The formation of this structure appears to drive apposition and subsequent fusion of viral and target cell membranes. Acts as a viral fusion peptide which is unmasked following S2 cleavage occurring upon virus endocytosis. This Mus musculus (Mouse) protein is Spike glycoprotein.